Here is a 580-residue protein sequence, read N- to C-terminus: Myb-like protein C (580 aa).

Disordered regions lie at residues 1-58, 73-101, 121-203, and 354-380; these read MTMI…YGSN, QYSI…TLLS, NVYN…SSTN, and SDND…NPPN. 3 stretches are compositionally biased toward low complexity: residues 20-47, 87-101, and 126-203; these read NNNN…NNNN, NSTM…TLLS, and PHQS…SSTN. Basic residues predominate over residues 361–371; the sequence is KKKRERIRKSV. HTH myb-type domains are found at residues 368–430 and 431–482; these read RKSV…CPAI and RKGS…SREV. 2 consecutive DNA-binding regions (H-T-H motif) follow at residues 402–426 and 454–478; these read WKKI…KRVL and WKNV…KSCM. Residues 484 to 546 enclose the Myb-like domain; sequence WSSREDEILQ…ECKTRYFQLN (63 aa).

The protein resides in the nucleus. Transcription activator required for the culmination, at the time of the fruiting body formation. Regulates genes involved in the cell differentiation within the fruiting body. This is Myb-like protein C (mybC) from Dictyostelium discoideum (Social amoeba).